A 1366-amino-acid chain; its full sequence is Collagen alpha-2(I) chain (1366 aa).

The N-terminal stretch at 1-22 (MLSFVDTRTLLLLAVTLCLATC) is a signal peptide. The residue at position 23 (Q23) is a Pyrrolidone carboxylic acid. Residues 23–79 (QSLQEETVRKGPAGDRGPRGERGPPGPPGRDGEDGPTGPPGPPGPPGPPGLGGNFAA) constitute a propeptide, N-terminal propeptide. Basic and acidic residues predominate over residues 28-44 (ETVRKGPAGDRGPRGER). The tract at residues 28–1130 (ETVRKGPAGD…QPRSAPSLRP (1103 aa)) is disordered. A 4-hydroxyproline mark is found at P47, P50, P62, P65, P68, and P71. Over residues 59–71 (TGPPGPPGPPGPP) the composition is skewed to pro residues. Q80 carries the pyrrolidone carboxylic acid modification. The residue at position 84 (K84) is an Allysine. The segment covering 84–94 (KGVGLGPGPMG) has biased composition (gly residues). The segment covering 95 to 140 (LMGPRGPPGAAGAPGPQGFQGPAGEPGEPGQTGPAGARGPAGPPGK) has biased composition (low complexity). A 4-hydroxyproline mark is found at P102 and P108. Over residues 141–155 (AGEDGHPGKPGRPGE) the composition is skewed to basic and acidic residues. A 5-hydroxylysine; alternate modification is found at K177. O-linked (Gal...) hydroxylysine; alternate glycosylation is present at K177. 6 stretches are compositionally biased toward low complexity: residues 225 to 254 (VGAPGPAGARGSDGSVGPVGPAGPIGSAGP), 269 to 293 (AVGNAGPAGPAGPRGEVGLPGLSGP), 300 to 321 (PGANGLTGAKGAAGLPGVAGAP), 330 to 345 (PGPVGAAGATGARGLV), 398 to 410 (LRGSPGSRGLPGA), and 419 to 434 (PPGSRGASGPAGVRGP). Residues P420, P441, and P444 each carry the 4-hydroxyproline modification. Low complexity-rich tracts occupy residues 470–489 (LPGIDGRPGPIGPAGARGEP) and 513–531 (AGLAGARGAPGPDGNNGAQ). Positions 538–547 (GVQGGKGEQG) are enriched in gly residues. 4 stretches are compositionally biased toward low complexity: residues 594–611 (PGESGAAGPTGPIGSRGP), 623–648 (EPGVVGAVGTAGPSGPSGLPGERGAA), 663–710 (RGEI…PRGS), and 717–737 (VGPAGPNGFAGPAGAAGQPGA). Over residues 738–747 (KGERGAKGPK) the composition is skewed to basic and acidic residues. Low complexity predominate over residues 752-765 (VVGPTGPVGAAGPA). Gly residues predominate over residues 775–784 (GSRGDGGPPG). Composition is skewed to low complexity over residues 786–795 (TGFPGAAGRT), 849–876 (SGEAGTAGPPGTPGPQGLLGAPGILGLP), 884–932 (LPGV…NPGN), 956–974 (PVGAAGAPGPHGPVGPAGK), and 983–1001 (PSGPVGPAGAVGPRGPSGP). A compositionally biased stretch (basic and acidic residues) spans 1005–1016 (RGDKGEPGEKGP). Positions 1089 to 1101 (AGPPGPPGPPGPP) are enriched in pro residues. Positions 1120–1366 (DQPRSAPSLR…FVDIGPVCFK (247 aa)) are cleaved as a propeptide — C-terminal propeptide. The 234-residue stretch at 1133–1366 (YEVDATLKSL…FVDIGPVCFK (234 aa)) folds into the Fibrillar collagen NC1 domain. Disulfide bonds link C1163/C1195, C1203/C1364, and C1272/C1317. Ca(2+) contacts are provided by D1181, N1183, Q1184, C1186, and D1189. Residue N1267 is glycosylated (N-linked (GlcNAc...) asparagine).

The protein belongs to the fibrillar collagen family. As to quaternary structure, trimers of one alpha 2(I) and two alpha 1(I) chains. Interacts (via C-terminus) with TMEM131 (via PapD-L domain); the interaction is direct and is involved in assembly and TRAPPIII ER-to-Golgi transport complex-dependent secretion of collagen. Post-translationally, prolines at the third position of the tripeptide repeating unit (G-X-Y) are hydroxylated in some or all of the chains. Forms the fibrils of tendon, ligaments and bones. In bones the fibrils are mineralized with calcium hydroxyapatite.

It localises to the secreted. The protein resides in the extracellular space. The protein localises to the extracellular matrix. Type I collagen is a member of group I collagen (fibrillar forming collagen). This Homo sapiens (Human) protein is Collagen alpha-2(I) chain (COL1A2).